The sequence spans 89 residues: Probable Fe(2+)-trafficking protein (89 aa).

This sequence belongs to the Fe(2+)-trafficking protein family.

Functionally, could be a mediator in iron transactions between iron acquisition and iron-requiring processes, such as synthesis and/or repair of Fe-S clusters in biosynthetic enzymes. The sequence is that of Probable Fe(2+)-trafficking protein from Hahella chejuensis (strain KCTC 2396).